A 305-amino-acid polypeptide reads, in one-letter code: UDP-3-O-acyl-N-acetylglucosamine deacetylase (305 aa).

Zn(2+)-binding residues include histidine 78, histidine 235, and aspartate 239. Catalysis depends on histidine 262, which acts as the Proton donor.

It belongs to the LpxC family. Zn(2+) serves as cofactor.

It catalyses the reaction a UDP-3-O-[(3R)-3-hydroxyacyl]-N-acetyl-alpha-D-glucosamine + H2O = a UDP-3-O-[(3R)-3-hydroxyacyl]-alpha-D-glucosamine + acetate. It participates in glycolipid biosynthesis; lipid IV(A) biosynthesis; lipid IV(A) from (3R)-3-hydroxytetradecanoyl-[acyl-carrier-protein] and UDP-N-acetyl-alpha-D-glucosamine: step 2/6. Functionally, catalyzes the hydrolysis of UDP-3-O-myristoyl-N-acetylglucosamine to form UDP-3-O-myristoylglucosamine and acetate, the committed step in lipid A biosynthesis. The sequence is that of UDP-3-O-acyl-N-acetylglucosamine deacetylase from Geobacter sp. (strain M21).